Reading from the N-terminus, the 246-residue chain is Small ribosomal subunit protein uS2 (246 aa).

The interval 225 to 246 (SKSSASVPNKDEYVAAEDGAAE) is disordered.

Belongs to the universal ribosomal protein uS2 family.

The protein is Small ribosomal subunit protein uS2 of Cellvibrio japonicus (strain Ueda107) (Pseudomonas fluorescens subsp. cellulosa).